A 484-amino-acid chain; its full sequence is Glutamyl-tRNA(Gln) amidotransferase subunit A (484 aa).

Active-site charge relay system residues include K76 and S151. Residue S175 is the Acyl-ester intermediate of the active site.

The protein belongs to the amidase family. GatA subfamily. In terms of assembly, heterotrimer of A, B and C subunits.

The enzyme catalyses L-glutamyl-tRNA(Gln) + L-glutamine + ATP + H2O = L-glutaminyl-tRNA(Gln) + L-glutamate + ADP + phosphate + H(+). Its function is as follows. Allows the formation of correctly charged Gln-tRNA(Gln) through the transamidation of misacylated Glu-tRNA(Gln) in organisms which lack glutaminyl-tRNA synthetase. The reaction takes place in the presence of glutamine and ATP through an activated gamma-phospho-Glu-tRNA(Gln). The sequence is that of Glutamyl-tRNA(Gln) amidotransferase subunit A from Halorhodospira halophila (strain DSM 244 / SL1) (Ectothiorhodospira halophila (strain DSM 244 / SL1)).